The chain runs to 96 residues: Cytochrome c-553 (96 aa).

Residues 1 to 19 (MKKVIVALGVLAFANVLMA) form the signal peptide. Residues cysteine 29, cysteine 32, histidine 33, and methionine 73 each contribute to the heme c site.

This sequence belongs to the cytochrome c family. In terms of processing, binds 1 heme c group covalently per subunit.

Its subcellular location is the periplasm. In terms of biological role, natural electron acceptor for a formate dehydrogenase. The protein is Cytochrome c-553 of Helicobacter pylori (strain J99 / ATCC 700824) (Campylobacter pylori J99).